Consider the following 248-residue polypeptide: Ribosomal RNA small subunit methyltransferase G (248 aa).

S-adenosyl-L-methionine is bound by residues glycine 85, phenylalanine 90, 108–110 (DSS), 137–138 (AE), and arginine 156.

The protein belongs to the methyltransferase superfamily. RNA methyltransferase RsmG family.

Its subcellular location is the cytoplasm. In terms of biological role, specifically methylates the N7 position of a guanine in 16S rRNA. This is Ribosomal RNA small subunit methyltransferase G from Prochlorococcus marinus (strain NATL1A).